A 421-amino-acid polypeptide reads, in one-letter code: Thymidine phosphorylase (421 aa).

Belongs to the thymidine/pyrimidine-nucleoside phosphorylase family. As to quaternary structure, homodimer.

It carries out the reaction thymidine + phosphate = 2-deoxy-alpha-D-ribose 1-phosphate + thymine. In terms of biological role, the enzymes which catalyze the reversible phosphorolysis of pyrimidine nucleosides are involved in the degradation of these compounds and in their utilization as carbon and energy sources, or in the rescue of pyrimidine bases for nucleotide synthesis. The chain is Thymidine phosphorylase (deoA) from Mycoplasma genitalium (strain ATCC 33530 / DSM 19775 / NCTC 10195 / G37) (Mycoplasmoides genitalium).